The sequence spans 614 residues: ETS-related transcription factor Elf-1 (614 aa).

Phosphoserine occurs at positions 110, 163, 167, and 168. A disordered region spans residues 159 to 199 (TYAHSPGPSSPEQPKRKKGRKTKPPRPDSPTTTPNISVKKK). The segment covering 173-182 (KRKKGRKTKP) has biased composition (basic residues). Serine 187 bears the Phosphoserine mark. Threonine 190 is subject to Phosphothreonine. The ETS DNA-binding region spans 208-290 (IYLWEFLLAL…EGQRLVYQFK (83 aa)). A disordered region spans residues 303–371 (DPSCSIESSD…VQPSEALRTV (69 aa)). The span at 310 to 335 (SSDPSLSSTATSSRNPASRSRASSSP) shows a compositional bias: low complexity. Serine 430 is modified (phosphoserine).

Belongs to the ETS family. As to quaternary structure, binds to the underphosphorylated form of RB. May interact with other transcription factors in order to regulate specific genes. Interacts with RUNX1.

It is found in the nucleus. Transcription factor that activates the LYN and BLK promoters. This is ETS-related transcription factor Elf-1 (ELF1) from Bos taurus (Bovine).